Reading from the N-terminus, the 197-residue chain is MKVLQEKILNEGKVLSGDVLKVDAFLNHQIDPVLMQEIGKEFAKRFKEENITKIVTIESSGIAPAVMAALELGVKVIFARKRKSLTLQDNMYVANVYSFTKQETNEISLSRNHIDENDRVLIIDDFLANGQAALGLMSLVEQAGASIAGIGIVIEKAFQDGGKKLREQGVRVESLAEIASLDNGTVAFVQHETAEVK.

Residues Leu20 and Asn27 each contribute to the xanthine site. Residue 128–132 (ANGQA) coordinates 5-phospho-alpha-D-ribose 1-diphosphate. Residue Lys156 participates in xanthine binding.

This sequence belongs to the purine/pyrimidine phosphoribosyltransferase family. Xpt subfamily. As to quaternary structure, homodimer.

Its subcellular location is the cytoplasm. It catalyses the reaction XMP + diphosphate = xanthine + 5-phospho-alpha-D-ribose 1-diphosphate. It functions in the pathway purine metabolism; XMP biosynthesis via salvage pathway; XMP from xanthine: step 1/1. Its function is as follows. Converts the preformed base xanthine, a product of nucleic acid breakdown, to xanthosine 5'-monophosphate (XMP), so it can be reused for RNA or DNA synthesis. The sequence is that of Xanthine phosphoribosyltransferase from Bacillus cereus (strain G9842).